Consider the following 123-residue polypeptide: Defensin beta 118 (123 aa).

Positions 1–19 (MKLLLLALPMLVLLPQVIP) are cleaved as a signal peptide. 3 disulfides stabilise this stretch: Cys-27/Cys-54, Cys-34/Cys-48, and Cys-38/Cys-55. Residues 65–123 (VPATSPTPLSDSTPGIIDDILTVRFTTDYFEVSSKKDMVEESEAGRGTETSLPNVHHSS) constitute a propeptide that is removed on maturation. Residues 100 to 110 (KDMVEESEAGR) are compositionally biased toward basic and acidic residues. Residues 100 to 123 (KDMVEESEAGRGTETSLPNVHHSS) are disordered. Over residues 112–123 (TETSLPNVHHSS) the composition is skewed to polar residues.

Belongs to the beta-defensin family. In terms of processing, the three-dimensional structure formed by the three intramolecular disulfide bridges is indispensable for antimicrobial activity. In terms of tissue distribution, high-level and epididymis-specific expression. Most abundant in the epithelium of the caput and present in the epididymis lumen and bound to sperm. Also expressed in pancreas.

Its subcellular location is the secreted. Host defense peptide that exhibits antimicrobial activity against both Gram-negative bacteria, such as E.coli and S.typhimurium, and Gram-positive bacteria, such as S.aureus and B.subtilis. Inhibits cell adhesion of E.coli on intestinal epithelial enterocytes. Causes rapid permeabilization of both the outer and inner membrane of E.coli, leading to morphological alterations on the bacterial surface. Binds to bacterial lipopolysaccharides (LPS) with high affinity, and may thereby be involved in immunoregulation through LPS neutralization. May contribute to epididymal innate immunity and protect the sperm against attack by microorganisms. The protein is Defensin beta 118 (DEFB118) of Homo sapiens (Human).